The sequence spans 150 residues: Endoribonuclease YbeY (150 aa).

Positions 112, 116, and 122 each coordinate Zn(2+).

The protein belongs to the endoribonuclease YbeY family. It depends on Zn(2+) as a cofactor.

It localises to the cytoplasm. Single strand-specific metallo-endoribonuclease involved in late-stage 70S ribosome quality control and in maturation of the 3' terminus of the 16S rRNA. The sequence is that of Endoribonuclease YbeY from Bdellovibrio bacteriovorus (strain ATCC 15356 / DSM 50701 / NCIMB 9529 / HD100).